The chain runs to 902 residues: Probable leucine--tRNA ligase, mitochondrial (902 aa).

Lysine 67 carries the N6-acetyllysine modification. Residues 91-101 carry the 'HIGH' region motif; it reads YPSGKLHMGHV. The residue at position 235 (lysine 235) is an N6-acetyllysine. The 'KMSKS' region signature appears at 638–642; it reads KMSKS. Lysine 641 is a binding site for ATP.

Belongs to the class-I aminoacyl-tRNA synthetase family.

It is found in the mitochondrion matrix. It carries out the reaction tRNA(Leu) + L-leucine + ATP = L-leucyl-tRNA(Leu) + AMP + diphosphate. This Mus musculus (Mouse) protein is Probable leucine--tRNA ligase, mitochondrial (Lars2).